Consider the following 131-residue polypeptide: Prefoldin subunit beta (131 aa).

Disordered stretches follow at residues 19–41 (LQETAQQVAQQKQQAETQLRESE) and 112–131 (LQGGAGGGPMGPGGPGAGGA). Residues 20–35 (QETAQQVAQQKQQAET) are compositionally biased toward low complexity. Gly residues predominate over residues 114 to 131 (GGAGGGPMGPGGPGAGGA).

Belongs to the prefoldin subunit beta family. Heterohexamer of two alpha and four beta subunits.

It is found in the cytoplasm. Its function is as follows. Molecular chaperone capable of stabilizing a range of proteins. Seems to fulfill an ATP-independent, HSP70-like function in archaeal de novo protein folding. In Natronomonas pharaonis (strain ATCC 35678 / DSM 2160 / CIP 103997 / JCM 8858 / NBRC 14720 / NCIMB 2260 / Gabara) (Halobacterium pharaonis), this protein is Prefoldin subunit beta.